Reading from the N-terminus, the 140-residue chain is uncharacterized protein (140 aa).

The VOC domain maps to 4 to 127 (TLTHLALHVP…AGNYVEFSYG (124 aa)).

This is an uncharacterized protein from Pseudomonas aeruginosa (strain ATCC 15692 / DSM 22644 / CIP 104116 / JCM 14847 / LMG 12228 / 1C / PRS 101 / PAO1).